Here is a 376-residue protein sequence, read N- to C-terminus: Chaperone protein DnaJ (376 aa).

The J domain occupies D4–G68. Residues G135–P217 form a CR-type zinc finger. C148, C151, C165, C168, C191, C194, C205, and C208 together coordinate Zn(2+). CXXCXGXG motif repeat units follow at residues C148–G155, C165–G172, C191–G198, and C205–G212.

It belongs to the DnaJ family. Homodimer. Zn(2+) serves as cofactor.

The protein resides in the cytoplasm. Its function is as follows. Participates actively in the response to hyperosmotic and heat shock by preventing the aggregation of stress-denatured proteins and by disaggregating proteins, also in an autonomous, DnaK-independent fashion. Unfolded proteins bind initially to DnaJ; upon interaction with the DnaJ-bound protein, DnaK hydrolyzes its bound ATP, resulting in the formation of a stable complex. GrpE releases ADP from DnaK; ATP binding to DnaK triggers the release of the substrate protein, thus completing the reaction cycle. Several rounds of ATP-dependent interactions between DnaJ, DnaK and GrpE are required for fully efficient folding. Also involved, together with DnaK and GrpE, in the DNA replication of plasmids through activation of initiation proteins. The sequence is that of Chaperone protein DnaJ from Synechococcus sp. (strain ATCC 27144 / PCC 6301 / SAUG 1402/1) (Anacystis nidulans).